The chain runs to 314 residues: uncharacterized protein (314 aa).

Residues 1-29 (MMRLIRTLPLRCFKTRIRRQGSLLCLRCF) constitute a mitochondrion transit peptide. A disordered region spans residues 52–74 (SSSPLSKNKEKQEKPEKENEGKH). Basic and acidic residues predominate over residues 58–74 (KNKEKQEKPEKENEGKH). Positions 177–207 (LNEHHLQLLKLKRELNSIHDELNEIIIDLLQ) form a coiled coil. A helical transmembrane segment spans residues 262–279 (GLLVILVLVCSIMIGVSA). A disordered region spans residues 281-314 (KKERPGLQEPEEPEILAPKEDIDTTFPQDQHDID).

It localises to the mitochondrion membrane. This is an uncharacterized protein from Saccharomyces cerevisiae (strain ATCC 204508 / S288c) (Baker's yeast).